A 428-amino-acid polypeptide reads, in one-letter code: MHSLQSFLFLLLLGYGVFAAPTSPQAQSQGRSFKVERIKRGNSIHGPTALRRAYRKFGIVPTTFGVDLSDFVPFNTTSISGTAANLVTDVQEPEQTGAVSAQSVQNDAAFVSPVTIGGQKIVMNFDTGSADFWVMNTELPASAQVGHTVFDPSKSSTFKKMEGATFEIKYGDSSFANGGVGTDTVDIGGATVTGQAIGIPTSVSNSFVEDTYSNGLVGLGFSSLNTVQPQQQKTFFDNIADSLDKPVMTAHLKSDGVGEYEFGIIDQTKYQGDMINVTVDSSGGFWQFQSAHYKVGDGPIQTIQNNAVAIADTGTSLMLLDDTVVNAYYAQVKGAQYASSAGGYIYPCNTELPNLAVAVGAKHLATVPGTFLDFAEVGINKTTGQTVCFGGIQSNQGTSMQILGDVFLKAFFVVFDLRGPSIGLASPK.

An N-terminal signal peptide occupies residues 1–19 (MHSLQSFLFLLLLGYGVFA). Residues 20-90 (APTSPQAQSQ…GTAANLVTDV (71 aa)) constitute a propeptide, activation peptide. In terms of domain architecture, Peptidase A1 spans 110-425 (FVSPVTIGGQ…DLRGPSIGLA (316 aa)). Aspartate 126 is an active-site residue. Asparagine 276 carries N-linked (GlcNAc...) asparagine glycosylation. The active site involves aspartate 312. The N-linked (GlcNAc...) asparagine glycan is linked to asparagine 380.

This sequence belongs to the peptidase A1 family.

The protein resides in the secreted. This Aspergillus fumigatus (strain ATCC MYA-4609 / CBS 101355 / FGSC A1100 / Af293) (Neosartorya fumigata) protein is Putative aspergillopepsin A-like aspartic endopeptidase AFUA_2G15950.